Reading from the N-terminus, the 107-residue chain is ATP-dependent Clp protease adapter protein ClpS (107 aa).

Basic and acidic residues predominate over residues 1 to 12; it reads MSGDKDFDKDSD. Residues 1-21 are disordered; that stretch reads MSGDKDFDKDSDVTVITRTTP.

The protein belongs to the ClpS family. In terms of assembly, binds to the N-terminal domain of the chaperone ClpA.

Involved in the modulation of the specificity of the ClpAP-mediated ATP-dependent protein degradation. The sequence is that of ATP-dependent Clp protease adapter protein ClpS from Zymomonas mobilis subsp. mobilis (strain ATCC 31821 / ZM4 / CP4).